The primary structure comprises 837 residues: Tuftelin-interacting protein 11 (837 aa).

The span at 1–13 shows a compositional bias: basic and acidic residues; sequence MSLSHLYRDGEGH. 3 disordered regions span residues 1–31, 54–73, and 85–136; these read MSLS…DWDL, WAER…RARD, and LKKG…AGGT. The interval 1–50 is required for interaction with DHX15; the sequence is MSLSHLYRDGEGHMDDDEDERENFEITDWDLQNEFNPNRQRHWQTKEEAT. Serine 2 carries the phosphoserine modification. The span at 14-28 shows a compositional bias: acidic residues; that stretch reads MDDDEDERENFEITD. The span at 54–64 shows a compositional bias: basic and acidic residues; sequence WAERDSDEERP. A phosphoserine mark is found at serine 59 and serine 98. A compositionally biased stretch (acidic residues) spans 91–102; that stretch reads EEAELEDSDDEE. The segment covering 103–116 has biased composition (basic and acidic residues); that stretch reads KPVKQDEFPKDFGP. A Phosphoserine modification is found at serine 144. The G-patch domain occupies 149-195; sequence TKGIGQKLLQKMGYVPGRGLGKNAQGIINPIEAKQRKGKGAVGAYGS. Disordered stretches follow at residues 183 to 236 and 287 to 313; these read QRKG…KKKP and HKHS…ARAP. Serine 210 is modified (phosphoserine). Over residues 217–231 the composition is skewed to basic and acidic residues; the sequence is EFQKELSQWRKDPSG. The short motif at 700–705 is the Nuclear localization signal element; it reads VKDKFN. The tract at residues 710–734 is required for nuclear speckle localization; the sequence is IMNRAVSSNVGAYMQPGAREHIAYL.

This sequence belongs to the TFP11/STIP family. As to quaternary structure, identified in the spliceosome C complex. Found in the Intron Large (IL) complex, a post-mRNA release spliceosomal complex containing the excised intron, U2, U5 and U6 snRNPs, and splicing factors. Interacts with TUFT1. Interacts with DHX15; indicative for a recruitment of DHX15 to the IL complex. Interacts with GCFC2.

The protein resides in the cytoplasm. The protein localises to the nucleus. In terms of biological role, involved in pre-mRNA splicing, specifically in spliceosome disassembly during late-stage splicing events. Intron turnover seems to proceed through reactions in two lariat-intron associated complexes termed Intron Large (IL) and Intron Small (IS). In cooperation with DHX15 seems to mediate the transition of the U2, U5 and U6 snRNP-containing IL complex to the snRNP-free IS complex leading to efficient debranching and turnover of excised introns. May play a role in the differentiation of ameloblasts and odontoblasts or in the forming of the enamel extracellular matrix. In Bos taurus (Bovine), this protein is Tuftelin-interacting protein 11 (TFIP11).